Consider the following 376-residue polypeptide: 3-aminomethylindole N-methyltransferase (376 aa).

G220, D243, D263, and M264 together coordinate S-adenosyl-L-homocysteine.

This sequence belongs to the class I-like SAM-binding methyltransferase superfamily. Cation-independent O-methyltransferase family. More present in the fifth leaf than in the second leaf (at protein level).

The enzyme catalyses 3-(aminomethyl)indole + 2 S-adenosyl-L-methionine = gramine + 2 S-adenosyl-L-homocysteine + 2 H(+). It participates in alkaloid biosynthesis. Its activity is regulated as follows. Repressed by sodium carbonate, sodium bicarbonate and K-phosphate. Methylates 3-aminomethylindole (AMI) and N-methyl-3-aminomethylindole (MAMI), two substrates involved in gramine biosynthesis, a toxic indole alkaloid. Can use S-adenosyl-L-methionine (AdoMet) as a methyl donor. Unable to mediate caffeic acid O-methylation. This is 3-aminomethylindole N-methyltransferase from Hordeum vulgare subsp. vulgare (Domesticated barley).